Reading from the N-terminus, the 394-residue chain is MNSIIELTDYYSSNNYAPLKLVITEGKGGKVWDTDGKQYIDCISGFSVANQGHCHPTIVKAMTEQASKLSIISRVLYSDNLGKWEEKICHLAKKDKVLPLNSGTEAVEAAIKIARKWGSDVKGITDGQVEIIAMNNNFHGRTLGSLSLSNHDAYKSGFHPLLQGTKTVDFGDIEQLTQAISPNTAAIILEPIQGEGGVNIPPKGYIQAVRQLCDKHQILLIADEIQVGLGRTGKWFAMEWEQVVPDIYILGKALGGGLYPVSAVLANNDVMRVLTPGTHGSTFGGNPLAIAISTAALDVLKDEQLVERSERLGSFLLKALLQLKHPSIKEIRGRGLFIGIELNTDAAPFVEQLIKRGILCKDTHRTIIRLSPPLVIDKEEINQIVAAFQDVFKN.

An N6-(pyridoxal phosphate)lysine modification is found at K252.

This sequence belongs to the class-III pyridoxal-phosphate-dependent aminotransferase family. OAT subfamily. It depends on pyridoxal 5'-phosphate as a cofactor.

Its subcellular location is the cytoplasm. It catalyses the reaction a 2-oxocarboxylate + L-ornithine = L-glutamate 5-semialdehyde + an L-alpha-amino acid. Its pathway is amino-acid biosynthesis; L-proline biosynthesis; L-glutamate 5-semialdehyde from L-ornithine: step 1/1. Its function is as follows. Catalyzes the interconversion of ornithine to glutamate semialdehyde. In Staphylococcus aureus (strain MRSA252), this protein is Ornithine aminotransferase 1.